The sequence spans 402 residues: 1-deoxy-D-xylulose 5-phosphate reductoisomerase (402 aa).

NADPH-binding residues include threonine 13, glycine 14, serine 15, isoleucine 16, and asparagine 126. 1-deoxy-D-xylulose 5-phosphate is bound at residue lysine 127. Residue glutamate 128 participates in NADPH binding. Position 152 (aspartate 152) interacts with Mn(2+). 4 residues coordinate 1-deoxy-D-xylulose 5-phosphate: serine 153, glutamate 154, serine 188, and histidine 211. Glutamate 154 contributes to the Mn(2+) binding site. Glycine 217 lines the NADPH pocket. 1-deoxy-D-xylulose 5-phosphate contacts are provided by serine 224, asparagine 229, lysine 230, and glutamate 233. Residue glutamate 233 coordinates Mn(2+).

This sequence belongs to the DXR family. It depends on Mg(2+) as a cofactor. Requires Mn(2+) as cofactor.

The enzyme catalyses 2-C-methyl-D-erythritol 4-phosphate + NADP(+) = 1-deoxy-D-xylulose 5-phosphate + NADPH + H(+). The protein operates within isoprenoid biosynthesis; isopentenyl diphosphate biosynthesis via DXP pathway; isopentenyl diphosphate from 1-deoxy-D-xylulose 5-phosphate: step 1/6. In terms of biological role, catalyzes the NADPH-dependent rearrangement and reduction of 1-deoxy-D-xylulose-5-phosphate (DXP) to 2-C-methyl-D-erythritol 4-phosphate (MEP). This Psychrobacter arcticus (strain DSM 17307 / VKM B-2377 / 273-4) protein is 1-deoxy-D-xylulose 5-phosphate reductoisomerase.